The primary structure comprises 208 residues: Putative archaetidylserine decarboxylase proenzyme (208 aa).

Serine 171 serves as the catalytic Schiff-base intermediate with substrate; via pyruvic acid. At serine 171 the chain carries Pyruvic acid (Ser); by autocatalysis.

The protein belongs to the phosphatidylserine decarboxylase family. PSD-A subfamily. As to quaternary structure, heterodimer of a large membrane-associated beta subunit and a small pyruvoyl-containing alpha subunit. Pyruvate serves as cofactor. In terms of processing, is synthesized initially as an inactive proenzyme. Formation of the active enzyme involves a self-maturation process in which the active site pyruvoyl group is generated from an internal serine residue via an autocatalytic post-translational modification. Two non-identical subunits are generated from the proenzyme in this reaction, and the pyruvate is formed at the N-terminus of the alpha chain, which is derived from the carboxyl end of the proenzyme. The post-translation cleavage follows an unusual pathway, termed non-hydrolytic serinolysis, in which the side chain hydroxyl group of the serine supplies its oxygen atom to form the C-terminus of the beta chain, while the remainder of the serine residue undergoes an oxidative deamination to produce ammonia and the pyruvoyl prosthetic group on the alpha chain.

It localises to the cell membrane. The catalysed reaction is archaetidylserine + H(+) = archaetidylethanolamine + CO2. In terms of biological role, catalyzes the formation of archaetidylethanolamine (PtdEtn) from archaetidylserine (PtdSer). This Methanococcoides burtonii (strain DSM 6242 / NBRC 107633 / OCM 468 / ACE-M) protein is Putative archaetidylserine decarboxylase proenzyme.